We begin with the raw amino-acid sequence, 567 residues long: DNA-binding protein REPIN1 (567 aa).

Residues 17 to 52 form a disordered region; that stretch reads PRLLSGPSQESPQTLGKESRGLRQQGTSVAQSGAQA. Polar residues predominate over residues 22–50; it reads GPSQESPQTLGKESRGLRQQGTSVAQSGA. Ser27 is modified (phosphoserine). A Phosphothreonine modification is found at Thr30. Lys33 bears the N6-acetyllysine mark. Residues 57 to 79 form a C2H2-type 1; atypical zinc finger; sequence HRCAHCRRHFPGWVALWLHTRRC. C2H2-type zinc fingers lie at residues 85–107, 116–138, 145–168, 177–199, 236–258, 264–286, and 292–314; these read LPCP…RQVH, FACH…LRAH, IACP…RRCH, FICG…KRVH, FQCA…RRVH, HQCP…RRIH, and YPCK…SKIH. At Lys276 the chain carries N6-acetyllysine. A compositionally biased stretch (basic residues) spans 305 to 315; sequence PNLLSHSKIHK. The tract at residues 305–372 is disordered; the sequence is PNLLSHSKIH…HPQDPIEAPP (68 aa). Residues 345 to 362 are compositionally biased toward pro residues; that stretch reads PAVPLKPAQEPPPGAPPE. 7 C2H2-type zinc fingers span residues 375-397, 403-425, 431-453, 459-481, 487-509, 515-537, and 543-565; these read YSCD…QRQH, FTCA…SRVH, FACE…RRDH, FVCP…RRIH, YVCP…RRIH, YACP…RKSH, and FCCA…QKKH.

Homodimers and homomultimers. Found in a complex with RIP60 and RIP100. Expressed in adipose tissue and bone tissue.

The protein localises to the nucleus. It localises to the cytoplasm. The protein resides in the cytosol. Sequence-specific double-stranded DNA-binding protein. Binds ATT-rich and T-rich DNA sequences and facilitates DNA bending. May regulate the expression of genes involved in cellular fatty acid import, including SCARB1/CD36, and genes involved in lipid droplet formation. May regulate the expression of LCN2, and thereby influence iron metabolism and apoptosis-related pathways. May regulate the expression of genes involved in glucose transport. The protein is DNA-binding protein REPIN1 (REPIN1) of Homo sapiens (Human).